Here is a 474-residue protein sequence, read N- to C-terminus: Glutamate--tRNA ligase (474 aa).

The 'HIGH' region motif lies at 9 to 19 (PSPTGYLHVGG). A 'KMSKS' region motif is present at residues 240–244 (KLSKR). Residue K243 coordinates ATP.

The protein belongs to the class-I aminoacyl-tRNA synthetase family. Glutamate--tRNA ligase type 1 subfamily. In terms of assembly, monomer.

It localises to the cytoplasm. It catalyses the reaction tRNA(Glu) + L-glutamate + ATP = L-glutamyl-tRNA(Glu) + AMP + diphosphate. Catalyzes the attachment of glutamate to tRNA(Glu) in a two-step reaction: glutamate is first activated by ATP to form Glu-AMP and then transferred to the acceptor end of tRNA(Glu). The chain is Glutamate--tRNA ligase from Aliivibrio fischeri (strain ATCC 700601 / ES114) (Vibrio fischeri).